We begin with the raw amino-acid sequence, 224 residues long: Beta-casein (224 aa).

The first 15 residues, 1–15 (MKVLILACLVALALA), serve as a signal peptide directing secretion. Residues S30, S32, S33, and S34 each carry the phosphoserine modification. S50 is modified (phosphoserine; in variant A1, variant A2, variant A3, variant B, variant E, variant F, variant G and variant H).

This sequence belongs to the beta-casein family. In terms of tissue distribution, mammary gland specific. Secreted in milk.

It localises to the secreted. Its function is as follows. Important role in determination of the surface properties of the casein micelles. Functionally, casoparan acts as a macrophage activator, increasing the phagocytic activity of macrophages and peroxide release from macrophages. It also acts as a bradykinin-potentiating peptide. In terms of biological role, casohypotensin acts as a bradykinin-potentiating peptide. Induces hypotension in rats. Acts as a strong competitive inhibitor of endo-oligopeptidase A. Antioxidant peptide has antioxidant activity. This Bos taurus (Bovine) protein is Beta-casein (CSN2).